Consider the following 130-residue polypeptide: Ribosome-binding factor A (130 aa).

It belongs to the RbfA family. As to quaternary structure, monomer. Binds 30S ribosomal subunits, but not 50S ribosomal subunits or 70S ribosomes.

The protein localises to the cytoplasm. In terms of biological role, one of several proteins that assist in the late maturation steps of the functional core of the 30S ribosomal subunit. Associates with free 30S ribosomal subunits (but not with 30S subunits that are part of 70S ribosomes or polysomes). Required for efficient processing of 16S rRNA. May interact with the 5'-terminal helix region of 16S rRNA. The polypeptide is Ribosome-binding factor A (Prochlorococcus marinus (strain AS9601)).